Consider the following 268-residue polypeptide: Tropinone reductase homolog At2g29370 (268 aa).

22–46 is a binding site for NADP(+); the sequence is LVTGGSKGLGKAVVEELAMLGARVH. S155 is a binding site for substrate. Y168 serves as the catalytic Proton acceptor.

The protein belongs to the short-chain dehydrogenases/reductases (SDR) family. SDR65C subfamily.

In Arabidopsis thaliana (Mouse-ear cress), this protein is Tropinone reductase homolog At2g29370.